We begin with the raw amino-acid sequence, 101 residues long: MIPGELMPADGEIELNAGRATVSVTVANTGDRPIQVGSHFHFYETNAALAFDRETARGFRLNIAAGTAVRFEPGQTRTVELVALDGDRIVYGFNGKIMGAL.

The protein belongs to the urease beta subunit family. Heterotrimer of UreA (gamma), UreB (beta) and UreC (alpha) subunits. Three heterotrimers associate to form the active enzyme.

Its subcellular location is the cytoplasm. It catalyses the reaction urea + 2 H2O + H(+) = hydrogencarbonate + 2 NH4(+). It participates in nitrogen metabolism; urea degradation; CO(2) and NH(3) from urea (urease route): step 1/1. The polypeptide is Urease subunit beta (Cupriavidus necator (strain ATCC 17699 / DSM 428 / KCTC 22496 / NCIMB 10442 / H16 / Stanier 337) (Ralstonia eutropha)).